Consider the following 258-residue polypeptide: UBX domain-containing protein 2A (258 aa).

Residues 1 to 14 show a composition bias toward basic and acidic residues; sequence MKEVDNLDSIKEEW. Residues 1-30 form a disordered region; that stretch reads MKEVDNLDSIKEEWACETGPPDSQPLNDNQ. The interval 1-152 is required for interaction with CHRNA3; that stretch reads MKEVDNLDSI…SATPRIVSKA (152 aa). The tract at residues 1–165 is required for inhibition of CHRNA3 ubiquitination and translocation of CHRNA3 to the plasma membrane resulting in an increase in acetylcholine-gated nicotinic acetylcholine receptor currents; the sequence is MKEVDNLDSI…EVDNKSTLSA (165 aa). The region spanning 61 to 125 is the SEP domain; the sequence is QVDVNIKLWK…VEDKKNEVCM (65 aa). Residues 168-258 are required for interaction with VCP; that stretch reads LNNLEPITRI…QKTAEPFRKL (91 aa). Residues 170 to 247 form the UBX domain; the sequence is NLEPITRIQI…DLKNAVIIQR (78 aa).

As to quaternary structure, part of a complex composed of STUB1/CHIP, VCP/p97, CHRNA3, and UBXN2A that modulates the ubiquitination and endoplasmic reticulum-associated degradation (ERAD) of CHRNA3. Within the complex UBXN2A acts as a scaffold protein required for the interaction of CHRNA3 with VCP/p97, this interaction also inhibits CHRNA3 ubiquitination by STUB1/CHIP and subsequently ERAD. Interacts (via SEP domain) with CHRNA3 and interacts (via UBX domain) with VCP/P97; these interactions are required for the interaction of CHRNA3 with the STUB1-VCP-UBXN2A complex. Interacts with HSPA9/MOT-2 (via SBD domain); the interaction inhibits HSPA9/MOT-2 interaction with and degradation of p53, thereby promotes p53 translocation to the nucleus. Interacts with RICTOR. Post-translationally, ubiquitinated. Expressed in the prefrontal cortex (at protein level). Expressed in the habenula and hippocampus (at protein level). Expressed in peripheral ganglia.

Its subcellular location is the golgi apparatus. It is found in the endoplasmic reticulum. The protein resides in the perikaryon. It localises to the cell projection. The protein localises to the dendrite. Its subcellular location is the nucleus. It is found in the cytoplasm. Its function is as follows. Acts to repress the ubiquitination and subsequent endoplasmic reticulum-associated degradation of CHRNA3 by the STUB1-VCP-UBXN2A complex in cortical neurons. Also acts to promote the translocation of CHRNA3 to the plasma membrane and subsequently increases plasma membrane acetylcholine-gated ion-channel activation. Plays a role in the inhibition of STUB1-mediated TP53 degradation, via its interaction with HSPA9 which acts to inhibit TP53 binding to HSPA9. Positively mediates the ubiquitination and proteosomal degradation of RICTOR, may thereby act as a negative regulator of the mTORC2 pathway. In Mus musculus (Mouse), this protein is UBX domain-containing protein 2A.